Consider the following 103-residue polypeptide: Large ribosomal subunit protein uL24 (103 aa).

This sequence belongs to the universal ribosomal protein uL24 family. In terms of assembly, part of the 50S ribosomal subunit.

In terms of biological role, one of two assembly initiator proteins, it binds directly to the 5'-end of the 23S rRNA, where it nucleates assembly of the 50S subunit. One of the proteins that surrounds the polypeptide exit tunnel on the outside of the subunit. This Vesicomyosocius okutanii subsp. Calyptogena okutanii (strain HA) protein is Large ribosomal subunit protein uL24.